A 218-amino-acid chain; its full sequence is Ribose-5-phosphate isomerase A (218 aa).

Substrate contacts are provided by residues 28–31, 81–84, and 94–97; these read TGST, DGAD, and KGGG. Glutamate 103 functions as the Proton acceptor in the catalytic mechanism. Position 121 (lysine 121) interacts with substrate.

This sequence belongs to the ribose 5-phosphate isomerase family. Homodimer.

It carries out the reaction aldehydo-D-ribose 5-phosphate = D-ribulose 5-phosphate. The protein operates within carbohydrate degradation; pentose phosphate pathway; D-ribose 5-phosphate from D-ribulose 5-phosphate (non-oxidative stage): step 1/1. Its function is as follows. Catalyzes the reversible conversion of ribose-5-phosphate to ribulose 5-phosphate. In Aliivibrio salmonicida (strain LFI1238) (Vibrio salmonicida (strain LFI1238)), this protein is Ribose-5-phosphate isomerase A.